Consider the following 185-residue polypeptide: Elongation factor P (185 aa).

It belongs to the elongation factor P family.

It localises to the cytoplasm. The protein operates within protein biosynthesis; polypeptide chain elongation. Functionally, involved in peptide bond synthesis. Stimulates efficient translation and peptide-bond synthesis on native or reconstituted 70S ribosomes in vitro. Probably functions indirectly by altering the affinity of the ribosome for aminoacyl-tRNA, thus increasing their reactivity as acceptors for peptidyl transferase. The sequence is that of Elongation factor P from Limosilactobacillus fermentum (strain NBRC 3956 / LMG 18251) (Lactobacillus fermentum).